A 350-amino-acid chain; its full sequence is Protein RecA (350 aa).

65–72 is an ATP binding site; sequence GPESSGKT. The segment at 326–350 is disordered; that stretch reads HNLKTRNTADSKVTGAKDEKSKEEK. The segment covering 340–350 has biased composition (basic and acidic residues); sequence GAKDEKSKEEK.

This sequence belongs to the RecA family.

It localises to the cytoplasm. Functionally, can catalyze the hydrolysis of ATP in the presence of single-stranded DNA, the ATP-dependent uptake of single-stranded DNA by duplex DNA, and the ATP-dependent hybridization of homologous single-stranded DNAs. It interacts with LexA causing its activation and leading to its autocatalytic cleavage. This Clostridium novyi (strain NT) protein is Protein RecA.